The following is a 432-amino-acid chain: Putative O-antigen transporter (432 aa).

Transmembrane regions (helical) follow at residues 14-34 (IIAASSWLSKIIIAGVQLVSV), 47-67 (AVFTLLTGLLVWFSIADIGIG), 90-110 (AAVHILFASLIILSSTLFFLS), 134-154 (FIASILFIFIGVGSVVYKILF), 164-184 (IINALSYLLGFLDVVAIHYLM), 189-209 (ITFALVALYAPVAILPIIYIS), 234-254 (GFLIFSSLSIIVLQTDYIVMS), 271-291 (IFGLMFFIYTAVLQALWPVCA), 305-325 (IIFLNIIGGVFFIGLGTLFIY), 334-354 (IIANGIDYNISGVVFVLLAVY), 376-396 (ILWLIVPCQALIGGVTQWYFA), and 400-420 (GIVGILYGLILSFSLTVFWGL).

Its subcellular location is the cell inner membrane. Its pathway is bacterial outer membrane biogenesis; LPS O-antigen biosynthesis. Functionally, may be involved in the translocation process of the nascent O-polysaccharide molecules and/or its ligation to lipid A core units. This is Putative O-antigen transporter (rfbX) from Salmonella typhi.